A 234-amino-acid polypeptide reads, in one-letter code: MIKIGASILSADFGHLREEIKKAEEAGVDFFHVDMMDGHFVPNISMGIGIAKHVKKLTELPVEVHLMVENVDLFVNEFEEMDYITFHIEAVKFPFRIINRIKSIGAKPIVALNPATPLDAIEYILGDVYAVLVMTVEPGFSGQKFIPVMTKKIRKLKSMIVENGYDTKIFVDGGINVETAPLAVKAGADVLVAASAIFGKDDVKTAVKNLREAALEALNKDFLTKSFNSNEEKQ.

A substrate-binding site is contributed by S7. H32, D34, and H65 together coordinate a divalent metal cation. The active-site Proton acceptor is D34. Substrate contacts are provided by residues H65, 139 to 142 (GFSG), 172 to 174 (DGG), and 194 to 195 (AS). D172 is an a divalent metal cation binding site. The Proton donor role is filled by D172.

The protein belongs to the ribulose-phosphate 3-epimerase family. The cofactor is a divalent metal cation.

The enzyme catalyses D-ribulose 5-phosphate = D-xylulose 5-phosphate. The protein operates within carbohydrate degradation. Its function is as follows. Catalyzes the reversible epimerization of D-ribulose 5-phosphate to D-xylulose 5-phosphate. The protein is Ribulose-phosphate 3-epimerase of Methanocaldococcus jannaschii (strain ATCC 43067 / DSM 2661 / JAL-1 / JCM 10045 / NBRC 100440) (Methanococcus jannaschii).